We begin with the raw amino-acid sequence, 406 residues long: Probable tRNA sulfurtransferase (406 aa).

Positions Glu-60–Lys-166 constitute a THUMP domain. ATP-binding positions include Met-184–Leu-185, His-209–Phe-210, Arg-266, Gly-288, and Gln-297.

Belongs to the ThiI family.

Its subcellular location is the cytoplasm. The catalysed reaction is [ThiI sulfur-carrier protein]-S-sulfanyl-L-cysteine + a uridine in tRNA + 2 reduced [2Fe-2S]-[ferredoxin] + ATP + H(+) = [ThiI sulfur-carrier protein]-L-cysteine + a 4-thiouridine in tRNA + 2 oxidized [2Fe-2S]-[ferredoxin] + AMP + diphosphate. The enzyme catalyses [ThiS sulfur-carrier protein]-C-terminal Gly-Gly-AMP + S-sulfanyl-L-cysteinyl-[cysteine desulfurase] + AH2 = [ThiS sulfur-carrier protein]-C-terminal-Gly-aminoethanethioate + L-cysteinyl-[cysteine desulfurase] + A + AMP + 2 H(+). The protein operates within cofactor biosynthesis; thiamine diphosphate biosynthesis. Catalyzes the ATP-dependent transfer of a sulfur to tRNA to produce 4-thiouridine in position 8 of tRNAs, which functions as a near-UV photosensor. Also catalyzes the transfer of sulfur to the sulfur carrier protein ThiS, forming ThiS-thiocarboxylate. This is a step in the synthesis of thiazole, in the thiamine biosynthesis pathway. The sulfur is donated as persulfide by IscS. In Limosilactobacillus fermentum (strain NBRC 3956 / LMG 18251) (Lactobacillus fermentum), this protein is Probable tRNA sulfurtransferase.